The primary structure comprises 512 residues: Reduced folate transporter (512 aa).

At methionine 1 the chain carries N-acetylmethionine. Residues 1 to 29 (MVPTGQVAEKQACEEPRQDRELKSWRWLV) lie on the Cytoplasmic side of the membrane. Residues 30–50 (FYLCFFGFMAQLRPGESFITP) traverse the membrane as a helical segment. Residues isoleucine 48 and threonine 49 each coordinate folate. Over 51–62 (YLLERNFTKEQV) the chain is Extracellular. Residue asparagine 56 is glycosylated (N-linked (GlcNAc...) asparagine). Residues 63–85 (TNEIIPMLPYSHLAVLVPIFLLT) traverse the membrane as a helical segment. The Cytoplasmic portion of the chain corresponds to 86–89 (DYLR). The helical transmembrane segment at 90–110 (YKPVLVLQCLSFVCVWLLLLL) threads the bilayer. Topologically, residues 111-114 (GTSV) are extracellular. A helical transmembrane segment spans residues 115 to 137 (VHMQLMEVFYSITMAARIAYSSY). Residues glutamate 121 and arginine 131 each coordinate folate. Topologically, residues 138–151 (IFSLVQPSRYQRMA) are cytoplasmic. The chain crosses the membrane as a helical span at residues 152–176 (SYSRAAVLLGVFISSVLGQVLVTLG). Valine 162 is a folate binding site. Residues 177-181 (GISTY) are Extracellular-facing. The chain crosses the membrane as a helical span at residues 182–200 (MLNCISLGFILFSLSLSLF). At 201-266 (LKRPKRSLFF…ELVKNVRQPQ (66 aa)) the chain is on the cytoplasmic side. Residues 267–292 (LRLWCLWWVFNSAGYYLITYYVHVLW) form a helical membrane-spanning segment. 3 residues coordinate folate: tyrosine 281, tyrosine 282, and tyrosine 286. At 293–300 (KITDSRLN) the chain is on the extracellular side. A helical membrane pass occupies residues 301-323 (YNGAVDAASTLLSAITAFTAGFV). The Cytoplasmic segment spans residues 324-329 (NIRWAL). The helical transmembrane segment at 330 to 350 (WSKLVIASVIAIQAGLVFCMF) threads the bilayer. Residues 351–353 (QIP) are Extracellular-facing. A helical transmembrane segment spans residues 354 to 377 (DIWVCYVTFVLFRGAYQFLVPIAT). Positions 366 and 370 each coordinate folate. Residues 378 to 391 (FQIASSLSKELCAL) lie on the Cytoplasmic side of the membrane. The helical transmembrane segment at 392–415 (VFGINTFLATALKTSITLVVSDKR) threads the bilayer. Residues 400-412 (ATALKTSITLVVS) are required for substrate-binding. Topologically, residues 416–423 (GLGLQVHQ) are extracellular. A helical membrane pass occupies residues 424–448 (QFRIYFMYFLTLSIICLAWAGLDGL). At 449 to 512 (RYYRRGRHQP…RADLRVEAKA (64 aa)) the chain is on the cytoplasmic side. Phosphoserine occurs at positions 466, 471, and 476. Positions 479 to 512 (DGDLRRPQPSAPQLLPEDGSVEDGRADLRVEAKA) are disordered. Basic and acidic residues predominate over residues 500 to 512 (EDGRADLRVEAKA).

It belongs to the reduced folate carrier (RFC) transporter (TC 2.A.48) family. As to expression, expressed in liver, heart, brain, spleen, lung and skeletal muscle.

The protein localises to the cell membrane. It localises to the apical cell membrane. Its subcellular location is the basolateral cell membrane. It catalyses the reaction 5-amino-1-(5-phospho-beta-D-ribosyl)imidazole-4-carboxamide(in) + (6S)-5-methyl-5,6,7,8-tetrahydrofolate(out) = 5-amino-1-(5-phospho-beta-D-ribosyl)imidazole-4-carboxamide(out) + (6S)-5-methyl-5,6,7,8-tetrahydrofolate(in). Its function is as follows. Antiporter that mediates the import of reduced folates, driven by the export of organic anions. Also acts as an importer of immunoreactive cyclic dinucleotides, but with a lower transporter activity. Mechanistically, acts as a secondary active transporter, which exports intracellular organic anions down their concentration gradients to facilitate the uptake of its substrates. Has high affinity for N5-methyltetrahydrofolate, the predominant circulating form of folate. Also mediates the import of antifolate drug methotrexate. 5-amino-4-imidazolecarboxamide riboside (AICAR), when phosphorylated to AICAR monophosphate, can serve as an organic anion for antiporter activity. The protein is Reduced folate transporter of Rattus norvegicus (Rat).